The sequence spans 72 residues: Alpha-elapitoxin-Dv2b (72 aa).

5 cysteine pairs are disulfide-bonded: cysteine 3–cysteine 21, cysteine 14–cysteine 42, cysteine 27–cysteine 31, cysteine 46–cysteine 57, and cysteine 58–cysteine 63.

Belongs to the three-finger toxin family. Long-chain subfamily. Type II alpha-neurotoxin sub-subfamily. In terms of processing, neurotoxin 4.7.3 differs from 4.9.3 only in that Trp-26 has undergone partial photooxidation. In terms of tissue distribution, expressed by the venom gland.

The protein localises to the secreted. Its function is as follows. Binds with high affinity to muscular (alpha-1/CHRNA1) and neuronal (alpha-7/CHRNA7) nicotinic acetylcholine receptor (nAChR) and inhibits acetylcholine from binding to the receptor, thereby impairing neuromuscular and neuronal transmission. The chain is Alpha-elapitoxin-Dv2b from Dendroaspis viridis (Western green mamba).